Consider the following 407-residue polypeptide: 1-deoxy-D-xylulose 5-phosphate reductoisomerase (407 aa).

NADPH-binding residues include Thr-25, Gly-26, Ser-27, Ile-28, Asn-53, and Asn-136. Lys-137 contributes to the 1-deoxy-D-xylulose 5-phosphate binding site. Glu-138 is an NADPH binding site. Asp-162 is a binding site for Mn(2+). The 1-deoxy-D-xylulose 5-phosphate site is built by Ser-163, Glu-164, Ser-188, and His-211. A Mn(2+)-binding site is contributed by Glu-164. Gly-217 is a binding site for NADPH. Positions 224, 229, 230, and 233 each coordinate 1-deoxy-D-xylulose 5-phosphate. Glu-233 contributes to the Mn(2+) binding site.

Belongs to the DXR family. It depends on Mg(2+) as a cofactor. The cofactor is Mn(2+).

The catalysed reaction is 2-C-methyl-D-erythritol 4-phosphate + NADP(+) = 1-deoxy-D-xylulose 5-phosphate + NADPH + H(+). It participates in isoprenoid biosynthesis; isopentenyl diphosphate biosynthesis via DXP pathway; isopentenyl diphosphate from 1-deoxy-D-xylulose 5-phosphate: step 1/6. Catalyzes the NADPH-dependent rearrangement and reduction of 1-deoxy-D-xylulose-5-phosphate (DXP) to 2-C-methyl-D-erythritol 4-phosphate (MEP). The chain is 1-deoxy-D-xylulose 5-phosphate reductoisomerase from Rhodopseudomonas palustris (strain HaA2).